Here is a 102-residue protein sequence, read N- to C-terminus: Small ribosomal subunit protein uS10 (102 aa).

Belongs to the universal ribosomal protein uS10 family. As to quaternary structure, part of the 30S ribosomal subunit.

In terms of biological role, involved in the binding of tRNA to the ribosomes. The sequence is that of Small ribosomal subunit protein uS10 from Oenococcus oeni (strain ATCC BAA-331 / PSU-1).